The sequence spans 360 residues: Dihydroorotate dehydrogenase (quinone) (360 aa).

FMN is bound by residues 67 to 71 and T91; that span reads AGLDK. K71 contacts substrate. Substrate is bound at residue 116–120; the sequence is NRMGF. Residues N145 and N176 each contribute to the FMN site. N176 contacts substrate. The active-site Nucleophile is S179. N181 lines the substrate pocket. Residues K222 and S250 each contribute to the FMN site. Position 251–252 (251–252) interacts with substrate; sequence NT. Residues G272, G301, and 322–323 each bind FMN; that span reads YS.

The protein belongs to the dihydroorotate dehydrogenase family. Type 2 subfamily. Monomer. It depends on FMN as a cofactor.

The protein localises to the cell membrane. The catalysed reaction is (S)-dihydroorotate + a quinone = orotate + a quinol. The protein operates within pyrimidine metabolism; UMP biosynthesis via de novo pathway; orotate from (S)-dihydroorotate (quinone route): step 1/1. Catalyzes the conversion of dihydroorotate to orotate with quinone as electron acceptor. The polypeptide is Dihydroorotate dehydrogenase (quinone) (Deinococcus deserti (strain DSM 17065 / CIP 109153 / LMG 22923 / VCD115)).